Reading from the N-terminus, the 293-residue chain is Movement protein BC1 (293 aa).

The protein belongs to the begomovirus movement protein BC1 family. In terms of assembly, binds to dimeric supercoiled plasmid DNA. In terms of processing, phosphorylated.

The protein resides in the host cell membrane. Its subcellular location is the host microsome membrane. It localises to the host endoplasmic reticulum membrane. Transports viral genome to neighboring plant cells directly through plasmosdesmata, without any budding. The movement protein allows efficient cell to cell propagation, by bypassing the host cell wall barrier. Begomovirus genome is shuttled out of nucleus by Nuclear shuttle protein (NSP) and the movement protein transports the DNA-NSP complex to cell plasmodesmata and facilitates further movement across the cell wall. This Potato yellow mosaic virus (isolate Venezuela) (PYMV) protein is Movement protein BC1.